The sequence spans 247 residues: GTP cyclohydrolase 1 type 2 homolog (247 aa).

The a divalent metal cation site is built by His63, His64, Asp101, His215, and Glu219.

Belongs to the GTP cyclohydrolase I type 2/NIF3 family. Homohexamer.

The sequence is that of GTP cyclohydrolase 1 type 2 homolog from Yersinia pestis.